Consider the following 273-residue polypeptide: Dermonecrotic toxin LruSicTox-alphaIC1c (273 aa).

Residue His-5 is part of the active site. Positions 25 and 27 each coordinate Mg(2+). His-41 (nucleophile) is an active-site residue. 2 cysteine pairs are disulfide-bonded: Cys-45–Cys-51 and Cys-47–Cys-190. Mg(2+) is bound at residue Asp-85.

This sequence belongs to the arthropod phospholipase D family. Class II subfamily. Mg(2+) serves as cofactor. In terms of tissue distribution, expressed by the venom gland.

Its subcellular location is the secreted. It carries out the reaction an N-(acyl)-sphingosylphosphocholine = an N-(acyl)-sphingosyl-1,3-cyclic phosphate + choline. It catalyses the reaction an N-(acyl)-sphingosylphosphoethanolamine = an N-(acyl)-sphingosyl-1,3-cyclic phosphate + ethanolamine. The enzyme catalyses a 1-acyl-sn-glycero-3-phosphocholine = a 1-acyl-sn-glycero-2,3-cyclic phosphate + choline. The catalysed reaction is a 1-acyl-sn-glycero-3-phosphoethanolamine = a 1-acyl-sn-glycero-2,3-cyclic phosphate + ethanolamine. Dermonecrotic toxins cleave the phosphodiester linkage between the phosphate and headgroup of certain phospholipids (sphingolipid and lysolipid substrates), forming an alcohol (often choline) and a cyclic phosphate. This toxin acts on sphingomyelin (SM). It may also act on ceramide phosphoethanolamine (CPE), lysophosphatidylcholine (LPC) and lysophosphatidylethanolamine (LPE), but not on lysophosphatidylserine (LPS), and lysophosphatidylglycerol (LPG). It acts by transphosphatidylation, releasing exclusively cyclic phosphate products as second products. Induces dermonecrosis, hemolysis, increased vascular permeability, edema, inflammatory response, and platelet aggregation. This is Dermonecrotic toxin LruSicTox-alphaIC1c from Loxosceles rufescens (Mediterranean recluse spider).